The chain runs to 305 residues: Autophagy-related protein 14 (305 aa).

Residues Lys-34–Arg-147 are a coiled coil.

This sequence belongs to the ATG14 family. As to quaternary structure, component of the autophagy-specific VPS34 PI3-kinase complex I.

It localises to the preautophagosomal structure membrane. The protein localises to the vacuole membrane. In terms of biological role, required for cytoplasm to vacuole transport (Cvt) and autophagy as a part of the autophagy-specific VPS34 PI3-kinase complex I. This complex is essential to recruit the ATG8-phosphatidylinositol conjugate and the ATG12-ATG5 conjugate to the pre-autophagosomal structure. ATG14 mediates the specific binding of the VPS34 PI3-kinase complex I to the preautophagosomal structure (PAS). This is Autophagy-related protein 14 from Kluyveromyces marxianus (strain DMKU3-1042 / BCC 29191 / NBRC 104275) (Yeast).